Consider the following 197-residue polypeptide: HTH-type transcriptional regulator BetI (197 aa).

The region spanning 8 to 68 (PIRRSQLIHA…ATMRHLLSAL (61 aa)) is the HTH tetR-type domain. The segment at residues 31–50 (SIALIARLAGVSNGIISHYF) is a DNA-binding region (H-T-H motif).

The protein operates within amine and polyamine biosynthesis; betaine biosynthesis via choline pathway [regulation]. Functionally, repressor involved in the biosynthesis of the osmoprotectant glycine betaine. It represses transcription of the choline transporter BetT and the genes of BetAB involved in the synthesis of glycine betaine. In Pseudomonas aeruginosa (strain LESB58), this protein is HTH-type transcriptional regulator BetI.